Here is a 250-residue protein sequence, read N- to C-terminus: Probable fimbrial chaperone YfcS (250 aa).

The signal sequence occupies residues 1 to 28 (MSDLLCSAKLGAMTLALLLSATSLSALA).

It belongs to the periplasmic pilus chaperone family.

It is found in the periplasm. Its function is as follows. Part of the yfcOPQRSUV fimbrial operon. Could contribute to adhesion to various surfaces in specific environmental niches. Increases adhesion to eukaryotic T24 bladder epithelial cells in the absence of fim genes. The sequence is that of Probable fimbrial chaperone YfcS (yfcS) from Escherichia coli (strain K12).